Consider the following 60-residue polypeptide: MSGGGVFTDILAAAGRIFEVMVEGHWETVGMLFDSLGKGTMRINRNAYGSMGGGTSLRGS.

Position 1 is an N-formylmethionine (methionine 1). Histidine 25 contacts a bacteriochlorophyll c.

It belongs to the BChl C/E-binding protein family.

It localises to the chlorosome. Its subcellular location is the chlorosome envelope. In terms of biological role, component of the photosynthetic apparatus. The light harvesting B740 complex binds bacteriochlorophyll c. The sequence is that of Bacteriochlorophyll c-binding protein (csmA) from Pelodictyon luteolum.